Reading from the N-terminus, the 338-residue chain is MAIELLYDADADLSLIQGRKVAIVGYGSQGHAHSQNLRDSGVEVVIGLREGSKSAEKAKEAGFEVKTTAEAAAWADVIMLLAPDTSQAEIFTNDIEPNLNAGDALLFGHGLNIHFDLIKPADDIIVGMVAPKGPGHLVRRQFVDGKGVPCLIAVDQDPTGTAQALTLSYAAAIGGARAGVIPTTFEAETVTDLFGEQAVLCGGTEELVKVGFEVLTEAGYEPEMAYFEVLHELKLIVDLMFEGGISNMNYSVSDTAEFGGYLSGPRVIDADTKSRMKDILTDIQDGTFTKRLIANVENGNTELEGLRASYNNHPIEETGAKLRDLMSWVKVDARAETA.

The region spanning 3–183 is the KARI N-terminal Rossmann domain; the sequence is IELLYDADAD…GGARAGVIPT (181 aa). NADP(+) is bound by residues 26–29, Arg49, Ser52, Ser54, and 84–87; these read YGSQ and DTSQ. His109 is a catalytic residue. Gly135 lines the NADP(+) pocket. Positions 184 to 329 constitute a KARI C-terminal knotted domain; the sequence is TFEAETVTDL…AKLRDLMSWV (146 aa). Asp192, Glu196, Glu228, and Glu232 together coordinate Mg(2+). Substrate is bound at residue Ser253.

It belongs to the ketol-acid reductoisomerase family. The cofactor is Mg(2+).

It carries out the reaction (2R)-2,3-dihydroxy-3-methylbutanoate + NADP(+) = (2S)-2-acetolactate + NADPH + H(+). The enzyme catalyses (2R,3R)-2,3-dihydroxy-3-methylpentanoate + NADP(+) = (S)-2-ethyl-2-hydroxy-3-oxobutanoate + NADPH + H(+). It participates in amino-acid biosynthesis; L-isoleucine biosynthesis; L-isoleucine from 2-oxobutanoate: step 2/4. The protein operates within amino-acid biosynthesis; L-valine biosynthesis; L-valine from pyruvate: step 2/4. Its function is as follows. Involved in the biosynthesis of branched-chain amino acids (BCAA). Catalyzes an alkyl-migration followed by a ketol-acid reduction of (S)-2-acetolactate (S2AL) to yield (R)-2,3-dihydroxy-isovalerate. In the isomerase reaction, S2AL is rearranged via a Mg-dependent methyl migration to produce 3-hydroxy-3-methyl-2-ketobutyrate (HMKB). In the reductase reaction, this 2-ketoacid undergoes a metal-dependent reduction by NADPH to yield (R)-2,3-dihydroxy-isovalerate. The chain is Ketol-acid reductoisomerase (NADP(+)) from Corynebacterium glutamicum (strain ATCC 13032 / DSM 20300 / JCM 1318 / BCRC 11384 / CCUG 27702 / LMG 3730 / NBRC 12168 / NCIMB 10025 / NRRL B-2784 / 534).